Reading from the N-terminus, the 397-residue chain is Lysosomal acid lipase/cholesteryl ester hydrolase (397 aa).

A signal peptide spans 1 to 25; that stretch reads MQLLGRVICFVVGILLSGGPTGTIS. Residues 26 to 72 constitute a propeptide, removed in mature form; it reads AVDPEANMNVTEIIMHWGYPEHSVQTGDGYILGVHRIPHGRKNQFDK. 3 N-linked (GlcNAc...) asparagine glycosylation sites follow: asparagine 34, asparagine 99, and asparagine 159. The 295-residue stretch at 84-378 folds into the AB hydrolase-1 domain; sequence HGFLADSSNW…EWDHLDFIWG (295 aa). Catalysis depends on serine 172, which acts as the Charge relay system. Residues asparagine 271 and asparagine 319 are each glycosylated (N-linked (GlcNAc...) asparagine). The Charge relay system role is filled by histidine 372.

This sequence belongs to the AB hydrolase superfamily. Lipase family. As to quaternary structure, monomer. Post-translationally, glycosylation is not essential for catalytic activity.

Its subcellular location is the lysosome. The catalysed reaction is a sterol ester + H2O = a sterol + a fatty acid + H(+). It carries out the reaction cholesteryl (9Z-octadecenoate) + H2O = cholesterol + (9Z)-octadecenoate + H(+). It catalyses the reaction a triacylglycerol + H2O = a 1,2-diacylglycerol + a fatty acid + H(+). The enzyme catalyses 1,2-di-(9Z-octadecenoyl)-glycerol + (9Z)-octadecenoate + H(+) = 1,2,3-tri-(9Z-octadecenoyl)-glycerol + H2O. The catalysed reaction is a 1,2-diacylglycerol + H2O = a 1-acylglycerol + a fatty acid + H(+). It carries out the reaction 1,2-di-(9Z-octadecenoyl)-glycerol + H2O = 1-(9Z-octadecenoyl)-glycerol + (9Z)-octadecenoate + H(+). It catalyses the reaction a 1,3-diacylglycerol + H2O = a 1-acylglycerol + a fatty acid + H(+). The enzyme catalyses 1,3-di-(9Z-octadecenoyl)-glycerol + H2O = 1-(9Z-octadecenoyl)-glycerol + (9Z)-octadecenoate + H(+). Its function is as follows. Catalyzes the deacylation of cholesteryl ester core lipids of endocytosed low density lipoproteins to generate free fatty acids and cholesterol. Hydrolyzes triglycerides (1,2,3-triacylglycerol) and diglycerides (such as 1,2-diacylglycerol and 1,3-diacylglycerol) with preference for the acyl moieties at the sn-1 or sn-3 positions. The polypeptide is Lysosomal acid lipase/cholesteryl ester hydrolase (Lipa) (Rattus norvegicus (Rat)).